We begin with the raw amino-acid sequence, 447 residues long: N-succinylarginine dihydrolase (447 aa).

Substrate-binding positions include 19 to 28 (AGLSFGNEAS), Asn-110, and 137 to 138 (HR). Glu-174 is an active-site residue. Residue Arg-212 coordinates substrate. His-248 is a catalytic residue. Residues Asp-250 and Asn-359 each coordinate substrate. Residue Cys-365 is the Nucleophile of the active site.

This sequence belongs to the succinylarginine dihydrolase family. In terms of assembly, homodimer.

It catalyses the reaction N(2)-succinyl-L-arginine + 2 H2O + 2 H(+) = N(2)-succinyl-L-ornithine + 2 NH4(+) + CO2. It functions in the pathway amino-acid degradation; L-arginine degradation via AST pathway; L-glutamate and succinate from L-arginine: step 2/5. Functionally, catalyzes the hydrolysis of N(2)-succinylarginine into N(2)-succinylornithine, ammonia and CO(2). In Citrobacter koseri (strain ATCC BAA-895 / CDC 4225-83 / SGSC4696), this protein is N-succinylarginine dihydrolase.